Reading from the N-terminus, the 1034-residue chain is MDCEKMGKLPVPRTDSVRVAVRVRPFSQREKNSGSQCVISMHARSITIRDPKDAELVKTFTFDLAYWSHDGFQKDEDGVLIPSDPTSKFAGQSDVFHDIGRGILDSAWQGYNATLLAYGQTGSGKSYSMIGYGANKGIIPRVCEELFQAIEKQKESLEAQVMFSMLEIYNEQIRDLLSRTKAPGGLRVREDQRLGFFVEGLKWVPCEDSVQIEKLVEQGSKIRMTASTNMNASSSRSHMLIAIRFKQVFLDTALTKQSSINMVDLAGSERQRSSGSEGDRLREGSRVNLSLTNLGNVISALADLAMGKKVLHIPYRDSVLTKLLQSALGGNSRTTLIAALSPADICYEETLSTLRYAERAKKVRNRAVINTCPLVRASRAENALLLGFGGAGAAEHSACFWAEQQLGTWGTWAQLLEQARREWEQQYMALAQEQQMVKILPHLLNVNEDPQLTGVLKFFIHNGSCEVGRAASNAICLQSLGISDKHASFTNMDGKVTVAPHITGKVIVNGVPVSSRTKLQHLDRIILGSNSAFLYIGFPSERGAEDLGRFDYDFFQMERAAAEGVSVDMLGTASPGDDQADPSILAVFQDYIKLMPLVVEANQMSEELKKGLKMELKVKNLASSDSRGCDLQKEVMVKVTKQGTHEVWIWSKAKFINRKFLMEELYQRFLESRDSHVAQEDDPFWDPVEVLHLGSAHVWLQSLAHRMMLEEQVEFLNCEGLEEAVLHIQITPCSPEGWAHGEEDTVIDPLELLGKRIDFQIHIVQCLGVKWLKEDATRGIQLGYKVYDLPNTLYTKPVWQSVNPRVEESVHFAALGVSREFLNYLLTNALVVDLWGLQEGCAHLGVSQPDVLFTGEGYIMVDTKTFSSVKDITSNQVPELYQKLLKLEQETELLRDINRALRGENVYLKAALENAGSAPQGERRYHKPDNPEGATVTAAGEAKQMCAQRASSDSQLARALKVFYGGMSVARGQLLRLRQCRPPEDDQMLRPFVHQQSQMLKDLEDLLESSLQKLKSDVAFIVKKKKEYLLPRGR.

Residues Ser16 to Val363 enclose the Kinesin motor domain. Gly119–Ser126 lines the ATP pocket. The FHA domain maps to Cys465–Gly528. Coiled-coil stretches lie at residues Asn875–Glu904 and His994–Glu1027.

The protein belongs to the TRAFAC class myosin-kinesin ATPase superfamily. Kinesin family.

It localises to the mitochondrion membrane. Its function is as follows. Microtubule-dependent motor protein required for mitochondrion morphology and transport of mitochondria in neuronal cells. The polypeptide is Kinesin-like protein KIF28 (Rattus norvegicus (Rat)).